The sequence spans 121 residues: Basic phospholipase A2 homolog BaTX (121 aa).

7 disulfide bridges follow: Cys-26/Cys-115, Cys-28/Cys-44, Cys-43/Cys-95, Cys-49/Cys-121, Cys-50/Cys-88, Cys-57/Cys-81, and Cys-75/Cys-86. The segment at Lys-105–Lys-117 is important for membrane-damaging activities in eukaryotes and bacteria; heparin-binding.

This sequence belongs to the phospholipase A2 family. Group II subfamily. K49 sub-subfamily. Homodimer; non-covalently linked. As to expression, expressed by the venom gland.

It localises to the secreted. Snake venom phospholipase A2 homolog that lacks enzymatic activity. Is myotoxic and displays edema-inducing activities. In vitro, produced time-dependent, irreversible neuromuscular blockade in isolated mouse phrenic nerve-diaphragm and chick biventer cervicis preparations. A model of myotoxic mechanism has been proposed: an apo Lys49-PLA2 is activated by the entrance of a hydrophobic molecule (e.g. fatty acid) at the hydrophobic channel of the protein leading to a reorientation of a monomer. This reorientation causes a transition between 'inactive' to 'active' states, causing alignment of C-terminal and membrane-docking sites (MDoS) side-by-side and putting the membrane-disruption sites (MDiS) in the same plane, exposed to solvent and in a symmetric position for both monomers. The MDoS region stabilizes the toxin on membrane by the interaction of charged residues with phospholipid head groups. Subsequently, the MDiS region destabilizes the membrane with penetration of hydrophobic residues. This insertion causes a disorganization of the membrane, allowing an uncontrolled influx of ions (i.e. calcium and sodium), and eventually triggering irreversible intracellular alterations and cell death. The chain is Basic phospholipase A2 homolog BaTX from Bothrops alternatus (Urutu).